The following is a 325-amino-acid chain: Necdin (325 aa).

Disordered regions lie at residues M1–V69 and A77–P96. In terms of domain architecture, MAGE spans L102–A301.

As to quaternary structure, binds to the transactivation domains of E2F1 and p53. Binds also SV40 large T antigen and adenovirus E1A. Interacts with nucleobindin 1 and 2. Brain specific. Not detected in other tissues. Expressed in postmitotic neurons. In adult brain the highest expression is in hypothalamus. Highly expressed in thalamus and midbrain. Relatively low levels are in cerebral cortex, hippocampus, striatum, olfactory bulb, cerebellum, pons and spinal cord. Also detected in neurally differentiated embryonal carcinoma cells.

Its subcellular location is the cytoplasm. It localises to the nucleus. It is found in the nucleoplasm. The protein localises to the nucleus matrix. Functionally, growth suppressor that facilitates the entry of the cell into cell cycle arrest. Functionally similar to the retinoblastoma protein it binds to and represses the activity of cell-cycle-promoting proteins such as SV40 large T antigen, adenovirus E1A, and the transcription factor E2F. Necdin also interacts with p53 and works in an additive manner to inhibit cell growth. Also functions as a transcription factor and directly binds to specific guanosine-rich DNA sequences. This is Necdin (Ndn) from Mus musculus (Mouse).